The primary structure comprises 827 residues: Spastin (827 aa).

The span at 1 to 13 (MVRNKYTLTTAGK) shows a compositional bias: polar residues. The segment at 1 to 58 (MVRNKYTLTTAGKSPSKKSRTGSLSKQHDATGDDDGETGTLDGSGSAAGSPVGGGTDA) is disordered. Residues 1 to 79 (MVRNKYTLTT…KQNLYIISFP (79 aa)) are Cytoplasmic-facing. Low complexity predominate over residues 38–50 (TGTLDGSGSAAGS). The helical intramembrane region spans 80–100 (VIFVFNVLRSLLYQLFIVFRY). The Cytoplasmic portion of the chain corresponds to 101-827 (VYNFTTKVVY…WLQDFGDVTL (727 aa)). Disordered regions lie at residues 127-190 (QHGH…AHPL) and 207-229 (SIQR…KQKH). Basic residues predominate over residues 129–141 (GHHHHHHHRHSSH). Positions 142-190 (SIHSTAAAHQLQQHQQQQQHQYSLLQQEQHGVTEPQQQQQQQHQAAHPL) are enriched in low complexity. One can recognise an MIT domain in the interval 231–306 (HRRAFEYISK…SMARDRLQFL (76 aa)). 3 disordered regions span residues 358–381 (HHPA…ATPS), 398–433 (VGYK…GGAG), and 476–526 (VSIP…PQIS). A compositionally biased stretch (low complexity) spans 364 to 381 (TAASSRPTTAATAPATPS). Low complexity-rich tracts occupy residues 476-486 (VSIPIPGSSPV) and 510-524 (QQPQ…QQPQ). ATP is bound at residue 592–599 (GPPGNGKT).

It belongs to the AAA ATPase family. Spastin subfamily. Homohexamer. The homohexamer is stabilized by ATP-binding. The homohexamer may adopt a ring conformation through which microtubules pass prior to being severed. Interacts with microtubules.

The protein resides in the membrane. The protein localises to the cytoplasm. It is found in the cytoskeleton. Its subcellular location is the microtubule organizing center. It localises to the centrosome. It catalyses the reaction n ATP + n H2O + a microtubule = n ADP + n phosphate + (n+1) alpha/beta tubulin heterodimers.. Functionally, ATP-dependent microtubule severing protein. Microtubule severing may promote reorganization of cellular microtubule arrays and the release of microtubules from the microtubule organizing center following nucleation. The sequence is that of Spastin (spas) from Anopheles gambiae (African malaria mosquito).